The primary structure comprises 161 residues: Cytochrome c-type biogenesis protein CcmE (161 aa).

Over 1-8 (MNARRKKR) the chain is Cytoplasmic. A helical; Signal-anchor for type II membrane protein transmembrane segment spans residues 9–29 (LALATALIGGVAAIASLLLYA). Residues 30–161 (LNSNLNLFYT…EYDSTQKTGY (132 aa)) are Periplasmic-facing. The heme site is built by H131 and Y135.

Belongs to the CcmE/CycJ family.

The protein localises to the cell inner membrane. Heme chaperone required for the biogenesis of c-type cytochromes. Transiently binds heme delivered by CcmC and transfers the heme to apo-cytochromes in a process facilitated by CcmF and CcmH. This chain is Cytochrome c-type biogenesis protein CcmE, found in Shewanella loihica (strain ATCC BAA-1088 / PV-4).